The chain runs to 62 residues: Large ribosomal subunit protein bL28 (62 aa).

A disordered region spans residues 1–26 (MARKCYVTGKSPKSGNNRSHALNKTK). Positions 11–20 (SPKSGNNRSH) are enriched in polar residues.

It belongs to the bacterial ribosomal protein bL28 family.

This chain is Large ribosomal subunit protein bL28, found in Exiguobacterium sp. (strain ATCC BAA-1283 / AT1b).